Here is a 657-residue protein sequence, read N- to C-terminus: MSASHKNLHSKLSIGGLLITLGIIYGDIGTSPLYVMKAILGNHTINADIVLGGISCVFWTLTLQTTIKYVLITLSADNHGEGGIFALYALVKKTKIQWLIVPAIIGGSALLADGIITPPISISSAVEGIRAFYPTMQTQTIVYIVITILFILFTIQQFGTKLVGKFFAPMMLIWFAMLGTLGFIQIMHFPEVIKAINPYYAYHLLSVHPDGFFVLGFVFLCTTGAEALYSDMGHCGRKNIRISWIFVKTTLVLNYFGQAAYLIHHEGSTLQQLGGENGNPFYLIMPHWFLPFGIVVATLAAVIASQALISGSFTLINEAMRLNFWPKVKIKYPTEVKGQLYIPSINWLLFFGCVGIVLHFEKSGNMEHAYGLAIILCMIMTTILLNYYLIMKRVKLYFMVPLITIYLLIEFSFLIANITKFAEGGYVTLIIAILLISIMTIWYLAKKINKNYTKVIKIDDYKKVLMELSEDLSIPKYATHLVYMTNANSVDELEEKVIYSILQKRPKRADIYWFVHVNILTEPYKTQYKVTEIAKDDIYRIDFNLGFREPTKINLMFREVIRDMVKRGEVDITSRYESLNKNNIIGDFKFVLSEKFLSNDNDLRWHENIIMNSYFFIKKLSLSEERAFGLDSSSVKIEKFPMVLHAPENIGLTRITK.

Helical transmembrane passes span 14-34 (IGGL…SPLY), 47-67 (ADIV…QTTI), 96-116 (IQWL…DGII), 140-160 (TIVY…QFGT), 166-186 (FFAP…FIQI), 201-221 (AYHL…VFLC), 242-262 (ISWI…AAYL), 283-303 (LIMP…AAVI), 340-360 (LYIP…VLHF), 371-391 (GLAI…YLIM), 396-416 (LYFM…FLIA), and 425-445 (GYVT…WYLA).

It belongs to the HAK/KUP transporter (TC 2.A.72) family.

It is found in the cell inner membrane. It carries out the reaction K(+)(in) + H(+)(in) = K(+)(out) + H(+)(out). Transport of potassium into the cell. Likely operates as a K(+):H(+) symporter. The sequence is that of Probable potassium transport system protein Kup from Flavobacterium johnsoniae (strain ATCC 17061 / DSM 2064 / JCM 8514 / BCRC 14874 / CCUG 350202 / NBRC 14942 / NCIMB 11054 / UW101) (Cytophaga johnsonae).